The chain runs to 392 residues: Galactokinase (392 aa).

Position 40 to 43 (40 to 43 (EHID)) interacts with substrate. ATP is bound by residues Ser-74 and 128-134 (GSGLSSS). 2 residues coordinate Mg(2+): Ser-134 and Glu-167. The active-site Proton acceptor is the Asp-179. Tyr-229 contacts substrate.

The protein belongs to the GHMP kinase family. GalK subfamily.

Its subcellular location is the cytoplasm. The enzyme catalyses alpha-D-galactose + ATP = alpha-D-galactose 1-phosphate + ADP + H(+). It participates in carbohydrate metabolism; galactose metabolism. In terms of biological role, catalyzes the transfer of the gamma-phosphate of ATP to D-galactose to form alpha-D-galactose-1-phosphate (Gal-1-P). This Clostridium tetani (strain Massachusetts / E88) protein is Galactokinase.